The sequence spans 508 residues: Photosystem II CP47 reaction center protein (508 aa).

A run of 6 helical transmembrane segments spans residues 21 to 36 (SVHIMHTALVAGWAGS), 101 to 115 (IVFSGLCFLAAIWHW), 140 to 156 (GIHLFLSGVACFGFGAF), 203 to 218 (IAAGTLGILAGLFHLS), 237 to 252 (VLSSSIAAVFFAAFVV), and 457 to 472 (SFALLFFFGHIWHGAR).

The protein belongs to the PsbB/PsbC family. PsbB subfamily. As to quaternary structure, PSII is composed of 1 copy each of membrane proteins PsbA, PsbB, PsbC, PsbD, PsbE, PsbF, PsbH, PsbI, PsbJ, PsbK, PsbL, PsbM, PsbT, PsbX, PsbY, PsbZ, Psb30/Ycf12, at least 3 peripheral proteins of the oxygen-evolving complex and a large number of cofactors. It forms dimeric complexes. The cofactor is Binds multiple chlorophylls. PSII binds additional chlorophylls, carotenoids and specific lipids..

Its subcellular location is the plastid. It is found in the chloroplast thylakoid membrane. In terms of biological role, one of the components of the core complex of photosystem II (PSII). It binds chlorophyll and helps catalyze the primary light-induced photochemical processes of PSII. PSII is a light-driven water:plastoquinone oxidoreductase, using light energy to abstract electrons from H(2)O, generating O(2) and a proton gradient subsequently used for ATP formation. This Acorus calamus var. americanus (American sweet flag) protein is Photosystem II CP47 reaction center protein.